Consider the following 912-residue polypeptide: Ubiquitin carboxyl-terminal hydrolase 3 (912 aa).

A compositionally biased stretch (basic and acidic residues) spans 1–11 (MNMQDANKEES). Disordered regions lie at residues 1-30 (MNMQ…TNMQ), 68-176 (IYHQ…SYSS), 241-384 (NSSV…TTAG), and 396-417 (GKSS…YVPP). 3 stretches are compositionally biased toward low complexity: residues 82–95 (NNIN…NNNI), 102–140 (SNGI…SNNH), and 159–176 (TNSS…SYSS). Basic residues predominate over residues 249-259 (AHHHTKSHSIP). Basic and acidic residues predominate over residues 260–310 (KHNEEVKTETHGEEEDAHDKKPHASKDAHELKKKTEVKKEDAKQDRNEKVI). Positions 335 to 355 (SKTSSPSPSPPAAKSWSAIAS) are enriched in low complexity. 2 stretches are compositionally biased toward polar residues: residues 361-384 (RQAS…TTAG) and 396-406 (GKSSSPLLSKQ). The 452-residue stretch at 460-911 (RGIINRANIC…TAYILMYQKR (452 aa)) folds into the USP domain. The Nucleophile role is filled by Cys469. Catalysis depends on His861, which acts as the Proton acceptor.

The protein belongs to the peptidase C19 family. As to quaternary structure, heterotetramer with BRE5; contains two molecules of BRE5 and two molecules of UBP3. Forms a complex composed of CDC48, DOA1, deubiquitinase UBP3 and probably BRE5. Within the complex interacts directly with DOA1 and CDC48 in a BRE5-independent manner.

It catalyses the reaction Thiol-dependent hydrolysis of ester, thioester, amide, peptide and isopeptide bonds formed by the C-terminal Gly of ubiquitin (a 76-residue protein attached to proteins as an intracellular targeting signal).. In terms of biological role, has an ATP-independent isopeptidase activity, cleaving at the C-terminus of the ubiquitin moiety in natural or engineered linear fusion proteins, irrespective of their size or the presence of an N-terminal extension to ubiquitin. Plays a role in regulation of silencing by interacting with SIR4. Also, in conjunction with BRE5, cleaves ubiquitin, leading to the subsequent mono-ubiquitination of SEC23. Required for ribophagy, a process which relocalizes ribosomal particles into the vacuole for degradation in response to starvation. The sequence is that of Ubiquitin carboxyl-terminal hydrolase 3 (UBP3) from Saccharomyces cerevisiae (strain ATCC 204508 / S288c) (Baker's yeast).